We begin with the raw amino-acid sequence, 332 residues long: RING finger protein 225 (332 aa).

Positions 1–55 (MPCPRLPWLRRHRTSQGSGPSSPSTVSAPNSPSRGEDEDAEEEEGDGTPGSGPIL) are disordered. Residues 15-27 (SQGSGPSSPSTVS) are compositionally biased toward low complexity. Over residues 36–46 (EDEDAEEEEGD) the composition is skewed to acidic residues. An RING-type zinc finger spans residues 63-111 (CLICVSPFDGIFKLPKRLDCGHVFCLECLARLSLATAGGGDAVACPMCR). The interval 121–187 (GLPALPTQPG…PPPLRLGRPL (67 aa)) is disordered. The helical transmembrane segment at 205-225 (ALAVLVAAGLVVSGVYIFFLI) threads the bilayer. The segment at 259–332 (THAWTRRPTK…ADGKKVQLQQ (74 aa)) is disordered. Basic and acidic residues-rich tracts occupy residues 280–295 (ATKDTPELEEATKDPV) and 323–332 (ADGKKVQLQQ).

It localises to the membrane. This Mus musculus (Mouse) protein is RING finger protein 225.